A 356-amino-acid chain; its full sequence is 1-deoxy-D-xylulose 5-phosphate reductoisomerase (356 aa).

Thr-7, Gly-8, Ser-9, Ile-10, Gly-31, Asn-33, and Asn-111 together coordinate NADPH. Lys-112 contributes to the 1-deoxy-D-xylulose 5-phosphate binding site. Glu-113 is an NADPH binding site. Asp-131 contributes to the Mn(2+) binding site. Positions 132, 133, 155, and 178 each coordinate 1-deoxy-D-xylulose 5-phosphate. Residue Glu-133 coordinates Mn(2+). Gly-184 serves as a coordination point for NADPH. The 1-deoxy-D-xylulose 5-phosphate site is built by Ser-191, Asn-196, Lys-197, and Glu-200. Glu-200 contacts Mn(2+).

Belongs to the DXR family. Mg(2+) is required as a cofactor. It depends on Mn(2+) as a cofactor.

The catalysed reaction is 2-C-methyl-D-erythritol 4-phosphate + NADP(+) = 1-deoxy-D-xylulose 5-phosphate + NADPH + H(+). The protein operates within isoprenoid biosynthesis; isopentenyl diphosphate biosynthesis via DXP pathway; isopentenyl diphosphate from 1-deoxy-D-xylulose 5-phosphate: step 1/6. Functionally, catalyzes the NADPH-dependent rearrangement and reduction of 1-deoxy-D-xylulose-5-phosphate (DXP) to 2-C-methyl-D-erythritol 4-phosphate (MEP). The polypeptide is 1-deoxy-D-xylulose 5-phosphate reductoisomerase (Campylobacter jejuni (strain RM1221)).